The chain runs to 288 residues: ATP synthase subunit a (288 aa).

Transmembrane regions (helical) follow at residues 47-67, 104-124, 157-177, 199-219, 237-257, and 258-278; these read LDSM…FWMV, LIAP…LMDL, DPNI…FYSI, PIVQ…TLIA, LIFI…SVPW, and AIFH…LTIV.

The protein belongs to the ATPase A chain family. In terms of assembly, F-type ATPases have 2 components, CF(1) - the catalytic core - and CF(0) - the membrane proton channel. CF(1) has five subunits: alpha(3), beta(3), gamma(1), delta(1), epsilon(1). CF(0) has three main subunits: a(1), b(2) and c(9-12). The alpha and beta chains form an alternating ring which encloses part of the gamma chain. CF(1) is attached to CF(0) by a central stalk formed by the gamma and epsilon chains, while a peripheral stalk is formed by the delta and b chains.

It localises to the cell inner membrane. Key component of the proton channel; it plays a direct role in the translocation of protons across the membrane. This Psychrobacter cryohalolentis (strain ATCC BAA-1226 / DSM 17306 / VKM B-2378 / K5) protein is ATP synthase subunit a.